Consider the following 67-residue polypeptide: Large ribosomal subunit protein bL32 (67 aa).

Over residues 1 to 19 the composition is skewed to basic residues; sequence MAVPKRKMSRANTRARRSQ. Residues 1–21 are disordered; it reads MAVPKRKMSRANTRARRSQWK.

Belongs to the bacterial ribosomal protein bL32 family.

This chain is Large ribosomal subunit protein bL32, found in Micrococcus luteus (strain ATCC 4698 / DSM 20030 / JCM 1464 / CCM 169 / CCUG 5858 / IAM 1056 / NBRC 3333 / NCIMB 9278 / NCTC 2665 / VKM Ac-2230) (Micrococcus lysodeikticus).